The sequence spans 561 residues: Arginine--tRNA ligase (561 aa).

The short motif at 119 to 129 (PNIAKPMSMGH) is the 'HIGH' region element.

It belongs to the class-I aminoacyl-tRNA synthetase family. Monomer.

It is found in the cytoplasm. The enzyme catalyses tRNA(Arg) + L-arginine + ATP = L-arginyl-tRNA(Arg) + AMP + diphosphate. The protein is Arginine--tRNA ligase of Lactobacillus acidophilus (strain ATCC 700396 / NCK56 / N2 / NCFM).